A 287-amino-acid polypeptide reads, in one-letter code: 4-hydroxybenzoate octaprenyltransferase (287 aa).

Helical transmembrane passes span 22–42, 45–65, 91–111, 114–134, 139–159, 161–181, 212–232, 236–256, and 267–287; these read IGTL…AQGF, LGVL…GCVI, TSTE…LLVL, NSLT…YPFM, QLPQ…AFAA, ANAL…WTIA, IIIA…GWLE, WIYF…QLQI, and AFLD…LGYL.

This sequence belongs to the UbiA prenyltransferase family. The cofactor is Mg(2+).

Its subcellular location is the cell inner membrane. The catalysed reaction is all-trans-octaprenyl diphosphate + 4-hydroxybenzoate = 4-hydroxy-3-(all-trans-octaprenyl)benzoate + diphosphate. The protein operates within cofactor biosynthesis; ubiquinone biosynthesis. Its function is as follows. Catalyzes the prenylation of para-hydroxybenzoate (PHB) with an all-trans polyprenyl group. Mediates the second step in the final reaction sequence of ubiquinone-8 (UQ-8) biosynthesis, which is the condensation of the polyisoprenoid side chain with PHB, generating the first membrane-bound Q intermediate 3-octaprenyl-4-hydroxybenzoate. This is 4-hydroxybenzoate octaprenyltransferase from Psychromonas ingrahamii (strain DSM 17664 / CCUG 51855 / 37).